A 235-amino-acid chain; its full sequence is Ribonuclease 3 (235 aa).

An RNase III domain is found at 6–131; the sequence is IDQLEKLTGH…LIAVIYLDGG (126 aa). E44 contributes to the Mg(2+) binding site. The active site involves D48. Positions 117 and 120 each coordinate Mg(2+). E120 is a catalytic residue. Residues 156–225 enclose the DRBM domain; that stretch reads DAKTQLQEWA…AEKILRREGI (70 aa).

This sequence belongs to the ribonuclease III family. As to quaternary structure, homodimer. Requires Mg(2+) as cofactor.

The protein localises to the cytoplasm. It carries out the reaction Endonucleolytic cleavage to 5'-phosphomonoester.. Its function is as follows. Digests double-stranded RNA. Involved in the processing of primary rRNA transcript to yield the immediate precursors to the large and small rRNAs (23S and 16S). Processes some mRNAs, and tRNAs when they are encoded in the rRNA operon. Processes pre-crRNA and tracrRNA of type II CRISPR loci if present in the organism. In Bartonella henselae (strain ATCC 49882 / DSM 28221 / CCUG 30454 / Houston 1) (Rochalimaea henselae), this protein is Ribonuclease 3.